We begin with the raw amino-acid sequence, 170 residues long: Putative invertase inhibitor (170 aa).

Residues 1-14 (MKLSFSLCIFFLIS) form the signal peptide. Cystine bridges form between Cys22-Cys37 and Cys93-Cys133.

Belongs to the PMEI family. As to expression, expressed in pollen (at protein level). Expressed in pollen.

The polypeptide is Putative invertase inhibitor (Platanus orientalis (Oriental plane-tree)).